The sequence spans 508 residues: NADH-quinone oxidoreductase subunit N 2 (508 aa).

14 helical membrane-spanning segments follow: residues Ser-14–Leu-34, Ser-43–Ala-63, Phe-90–Ala-110, Gly-119–Val-139, Leu-144–Ile-164, Phe-179–Val-199, Gly-223–Phe-243, Gly-275–Thr-295, Trp-298–Leu-318, Met-327–Leu-347, Ile-353–Val-373, Ala-400–Leu-420, Gly-433–Val-455, and Thr-473–Ala-493.

Belongs to the complex I subunit 2 family. As to quaternary structure, NDH-1 is composed of 14 different subunits. Subunits NuoA, H, J, K, L, M, N constitute the membrane sector of the complex.

It is found in the cell membrane. The catalysed reaction is a quinone + NADH + 5 H(+)(in) = a quinol + NAD(+) + 4 H(+)(out). Its function is as follows. NDH-1 shuttles electrons from NADH, via FMN and iron-sulfur (Fe-S) centers, to quinones in the respiratory chain. The immediate electron acceptor for the enzyme in this species is believed to be a menaquinone. Couples the redox reaction to proton translocation (for every two electrons transferred, four hydrogen ions are translocated across the cytoplasmic membrane), and thus conserves the redox energy in a proton gradient. The sequence is that of NADH-quinone oxidoreductase subunit N 2 from Symbiobacterium thermophilum (strain DSM 24528 / JCM 14929 / IAM 14863 / T).